The primary structure comprises 387 residues: 3-ketoacyl-CoA thiolase (387 aa).

C91 acts as the Acyl-thioester intermediate in catalysis. Catalysis depends on proton acceptor residues H343 and C373.

The protein belongs to the thiolase-like superfamily. Thiolase family. In terms of assembly, heterotetramer of two alpha chains (FadB) and two beta chains (FadA).

The protein resides in the cytoplasm. It carries out the reaction an acyl-CoA + acetyl-CoA = a 3-oxoacyl-CoA + CoA. It functions in the pathway lipid metabolism; fatty acid beta-oxidation. Catalyzes the final step of fatty acid oxidation in which acetyl-CoA is released and the CoA ester of a fatty acid two carbons shorter is formed. In Shewanella sp. (strain ANA-3), this protein is 3-ketoacyl-CoA thiolase.